Reading from the N-terminus, the 247-residue chain is UPF0659 protein C216.03 (247 aa).

It belongs to the UPF0659 family.

The protein resides in the cytoplasm. It localises to the nucleus. The protein is UPF0659 protein C216.03 of Schizosaccharomyces pombe (strain 972 / ATCC 24843) (Fission yeast).